The primary structure comprises 631 residues: Arginine--tRNA ligase (631 aa).

Residues 132–142 (PNIAKPLHVGH) carry the 'HIGH' region motif.

It belongs to the class-I aminoacyl-tRNA synthetase family.

The protein resides in the cytoplasm. It catalyses the reaction tRNA(Arg) + L-arginine + ATP = L-arginyl-tRNA(Arg) + AMP + diphosphate. This is Arginine--tRNA ligase from Halobacterium salinarum (strain ATCC 700922 / JCM 11081 / NRC-1) (Halobacterium halobium).